The following is a 275-amino-acid chain: Pyridoxal phosphate homeostasis protein (275 aa).

Ser6 carries the post-translational modification Phosphoserine. The residue at position 47 (Lys47) is an N6-(pyridoxal phosphate)lysine. Phosphotyrosine is present on Tyr69. Lys125 carries the N6-succinyllysine modification. Phosphoserine occurs at positions 226 and 244. A compositionally biased stretch (basic and acidic residues) spans 251–263 (DYSKKPTPDKCAA). The segment at 251 to 275 (DYSKKPTPDKCAADVKAPLEVAQEH) is disordered.

The protein belongs to the pyridoxal phosphate-binding protein YggS/PROSC family. Ubiquitous.

Functionally, pyridoxal 5'-phosphate (PLP)-binding protein, which may be involved in intracellular homeostatic regulation of pyridoxal 5'-phosphate (PLP), the active form of vitamin B6. The sequence is that of Pyridoxal phosphate homeostasis protein from Homo sapiens (Human).